A 344-amino-acid polypeptide reads, in one-letter code: N-acetyl-gamma-glutamyl-phosphate reductase (344 aa).

The active site involves Cys150.

The protein belongs to the NAGSA dehydrogenase family. Type 1 subfamily.

The protein localises to the cytoplasm. The enzyme catalyses N-acetyl-L-glutamate 5-semialdehyde + phosphate + NADP(+) = N-acetyl-L-glutamyl 5-phosphate + NADPH + H(+). Its pathway is amino-acid biosynthesis; L-arginine biosynthesis; N(2)-acetyl-L-ornithine from L-glutamate: step 3/4. Functionally, catalyzes the NADPH-dependent reduction of N-acetyl-5-glutamyl phosphate to yield N-acetyl-L-glutamate 5-semialdehyde. This is N-acetyl-gamma-glutamyl-phosphate reductase from Pseudomonas savastanoi pv. phaseolicola (strain 1448A / Race 6) (Pseudomonas syringae pv. phaseolicola (strain 1448A / Race 6)).